We begin with the raw amino-acid sequence, 704 residues long: Rabphilin-3A (704 aa).

Over residues 1-12 (MTDTVFSSSSSR) the composition is skewed to polar residues. The tract at residues 1-52 (MTDTVFSSSSSRWMCPSDRPLQSNDKEQLQTGWSVHPSGQPDRQRKQEELTD) is disordered. In terms of domain architecture, RabBD spans 44–161 (QRKQEELTDE…KRSGAWFFKG (118 aa)). Residues 92–149 (GDGVNRCILCGEQLGMLGSACVVCEDCKKNVCTKCGVETSNNRPHPVWLCKICIEQRE) form an FYVE-type zinc finger. The Zn(2+) site is built by C98, C101, C115, C118, C123, C126, C141, and C144. The interval 167 to 398 (LPQPMPIKKN…EEEANSYDSD (232 aa)) is disordered. Over residues 205-214 (TRGDTEDRRG) the composition is skewed to basic and acidic residues. At R229 the chain carries Omega-N-methylarginine. Position 277 is a phosphoserine (S277). Over residues 279-290 (QASRPAPASMQS) the composition is skewed to low complexity. Residues 291–310 (PAPPQPGQPGPPGGSRPSPG) show a composition bias toward pro residues. Over residues 366 to 380 (QASAAAPQPVVASAR) the composition is skewed to low complexity. Residues 385–398 (PEEDEEEANSYDSD) show a composition bias toward acidic residues. Residues 402–524 (TLGALEFSLL…KPNQRKNFNI (123 aa)) enclose the C2 1 domain. Residues M432, D433, D439, D494, E495, D496, E502, E549, D591, D597, D651, Y652, D653, and D659 each coordinate Ca(2+). Positions 560-693 (ERGKILVSLM…NKDKKIERWH (134 aa)) constitute a C2 2 domain. Phosphoserine is present on residues S702 and S703.

As to quaternary structure, interacts with RAB3B, RAB3C, RAB3D, RAB8A, RAB27A and RAB27B. Interacts with RAB3A; this interaction recruits RPH3A to synaptic vesicules. Interacts (via C2B domain) with SNAP25. Interacts with deubiquitinating enzyme CAND1; this interaction results in the deubiquitination of RPH3A. Interacts with GRIN2A and DLG4; this ternary complex regulates NMDA receptor composition at postsynaptic membranes. Interacts with SNCA. Ca(2+) is required as a cofactor. Post-translationally, ubiquitinated. Deubiquitinated by CAND1 to prevent its degradation. As to expression, specifically expressed in brain.

The protein localises to the cytoplasmic vesicle. The protein resides in the secretory vesicle. It localises to the synaptic vesicle membrane. It is found in the cell projection. Its subcellular location is the dendritic spine. The protein localises to the postsynaptic cell membrane. The protein resides in the membrane. Plays an essential role in docking and fusion steps of regulated exocytosis. At the presynaptic level, RPH3A is recruited by RAB3A to the synaptic vesicle membrane in a GTP-dependent manner where it modulates synaptic vesicle trafficking and calcium-triggered neurotransmitter release. In the post-synaptic compartment, forms a ternary complex with GRIN2A and DLG4 and regulates NMDA receptor stability. Also plays a role in the exocytosis of arginine vasopressin hormone. In Bos taurus (Bovine), this protein is Rabphilin-3A (RPH3A).